We begin with the raw amino-acid sequence, 342 residues long: MLTNPSQVIIRNQETLSQHKVLVLNHEADSLPKALLDVAQSVDALALDYHHYLHLAPQANAKLRCYFGHQLPHQDKYDTVIVYFPKAKPLAPYLFNLAAQHLVADGQLLVVGENKGGVKSLVKLLPKYFATGVKLDNARHCLLFGSSLIDTAPEIKLSDWTSQYQLATPQGNITICNLVGVFSEKHLDQGTELLLSHLPTLSGRVLDFGCGAGVIAAALLKAQPTLSLECIDINAMALASCELTLAANGMTAKVYPSDGLAQTSGKFDGIISNPPFHDGLASTTSIAQSFVADSAKQLQSKGIWQIVANRHLPYSDTIAAEFGQLTVPAENNKYKLYSFQQA.

This sequence belongs to the methyltransferase superfamily. RsmC family. In terms of assembly, monomer.

Its subcellular location is the cytoplasm. It carries out the reaction guanosine(1207) in 16S rRNA + S-adenosyl-L-methionine = N(2)-methylguanosine(1207) in 16S rRNA + S-adenosyl-L-homocysteine + H(+). Specifically methylates the guanine in position 1207 of 16S rRNA in the 30S particle. In Shewanella sp. (strain MR-4), this protein is Ribosomal RNA small subunit methyltransferase C.